A 312-amino-acid chain; its full sequence is Ribosomal RNA small subunit methyltransferase H (312 aa).

S-adenosyl-L-methionine-binding positions include 35–37 (GGH), aspartate 55, phenylalanine 79, aspartate 101, and glutamine 108.

It belongs to the methyltransferase superfamily. RsmH family.

The protein resides in the cytoplasm. The catalysed reaction is cytidine(1402) in 16S rRNA + S-adenosyl-L-methionine = N(4)-methylcytidine(1402) in 16S rRNA + S-adenosyl-L-homocysteine + H(+). Specifically methylates the N4 position of cytidine in position 1402 (C1402) of 16S rRNA. In Buchnera aphidicola subsp. Acyrthosiphon pisum (strain APS) (Acyrthosiphon pisum symbiotic bacterium), this protein is Ribosomal RNA small subunit methyltransferase H.